We begin with the raw amino-acid sequence, 239 residues long: Purine nucleoside phosphorylase DeoD-type (239 aa).

Position 5 (His5) interacts with a purine D-ribonucleoside. Residues Gly21, Arg25, Arg44, and 88–91 (RVGS) contribute to the phosphate site. A purine D-ribonucleoside is bound by residues 180-182 (EME) and 204-205 (SD). Asp205 acts as the Proton donor in catalysis.

It belongs to the PNP/UDP phosphorylase family. As to quaternary structure, homohexamer; trimer of homodimers.

It catalyses the reaction a purine D-ribonucleoside + phosphate = a purine nucleobase + alpha-D-ribose 1-phosphate. It carries out the reaction a purine 2'-deoxy-D-ribonucleoside + phosphate = a purine nucleobase + 2-deoxy-alpha-D-ribose 1-phosphate. Its function is as follows. Catalyzes the reversible phosphorolytic breakdown of the N-glycosidic bond in the beta-(deoxy)ribonucleoside molecules, with the formation of the corresponding free purine bases and pentose-1-phosphate. In Myxococcus xanthus (strain DK1622), this protein is Purine nucleoside phosphorylase DeoD-type.